Consider the following 209-residue polypeptide: Small ribosomal subunit protein uS4 (209 aa).

Residues 99-160 enclose the S4 RNA-binding domain; it reads ARLDSVAYRM…RARASLRCKA (62 aa).

It belongs to the universal ribosomal protein uS4 family. As to quaternary structure, part of the 30S ribosomal subunit. Contacts protein S5. The interaction surface between S4 and S5 is involved in control of translational fidelity.

Its function is as follows. One of the primary rRNA binding proteins, it binds directly to 16S rRNA where it nucleates assembly of the body of the 30S subunit. With S5 and S12 plays an important role in translational accuracy. In Dechloromonas aromatica (strain RCB), this protein is Small ribosomal subunit protein uS4.